The sequence spans 339 residues: Ketol-acid reductoisomerase (NADP(+)) (339 aa).

The 182-residue stretch at 1 to 182 (MRVYYDRDAD…GGGRAGIIET (182 aa)) folds into the KARI N-terminal Rossmann domain. Residues 24 to 27 (YGSQ), arginine 48, serine 51, threonine 53, and 83 to 86 (DELQ) contribute to the NADP(+) site. Histidine 108 is a catalytic residue. Glycine 134 contacts NADP(+). A KARI C-terminal knotted domain is found at 183–328 (TFREECETDL…AKLREMMPWI (146 aa)). Positions 191, 195, 227, and 231 each coordinate Mg(2+). Residue serine 252 coordinates substrate.

This sequence belongs to the ketol-acid reductoisomerase family. The cofactor is Mg(2+).

The enzyme catalyses (2R)-2,3-dihydroxy-3-methylbutanoate + NADP(+) = (2S)-2-acetolactate + NADPH + H(+). It catalyses the reaction (2R,3R)-2,3-dihydroxy-3-methylpentanoate + NADP(+) = (S)-2-ethyl-2-hydroxy-3-oxobutanoate + NADPH + H(+). The protein operates within amino-acid biosynthesis; L-isoleucine biosynthesis; L-isoleucine from 2-oxobutanoate: step 2/4. It functions in the pathway amino-acid biosynthesis; L-valine biosynthesis; L-valine from pyruvate: step 2/4. In terms of biological role, involved in the biosynthesis of branched-chain amino acids (BCAA). Catalyzes an alkyl-migration followed by a ketol-acid reduction of (S)-2-acetolactate (S2AL) to yield (R)-2,3-dihydroxy-isovalerate. In the isomerase reaction, S2AL is rearranged via a Mg-dependent methyl migration to produce 3-hydroxy-3-methyl-2-ketobutyrate (HMKB). In the reductase reaction, this 2-ketoacid undergoes a metal-dependent reduction by NADPH to yield (R)-2,3-dihydroxy-isovalerate. This chain is Ketol-acid reductoisomerase (NADP(+)), found in Rhodopseudomonas palustris (strain BisA53).